The sequence spans 278 residues: Shikimate dehydrogenase (NADP(+)) (278 aa).

Residues 19-21 (SRS) and threonine 66 each bind shikimate. Lysine 70 acts as the Proton acceptor in catalysis. Shikimate contacts are provided by asparagine 91 and aspartate 106. NADP(+)-binding positions include 129–133 (GAGGA) and phenylalanine 221. Tyrosine 223 serves as a coordination point for shikimate. Position 242 (glycine 242) interacts with NADP(+).

Belongs to the shikimate dehydrogenase family. Homodimer.

It catalyses the reaction shikimate + NADP(+) = 3-dehydroshikimate + NADPH + H(+). Its pathway is metabolic intermediate biosynthesis; chorismate biosynthesis; chorismate from D-erythrose 4-phosphate and phosphoenolpyruvate: step 4/7. Functionally, involved in the biosynthesis of the chorismate, which leads to the biosynthesis of aromatic amino acids. Catalyzes the reversible NADPH linked reduction of 3-dehydroshikimate (DHSA) to yield shikimate (SA). This is Shikimate dehydrogenase (NADP(+)) from Anaeromyxobacter sp. (strain K).